Consider the following 695-residue polypeptide: RING finger protein 145 (695 aa).

The next 13 helical transmembrane spans lie at Tyr-53–Pro-73, Leu-77–Ser-97, Phe-123–Thr-143, Ile-146–Glu-166, Ile-168–Ala-188, Leu-225–Thr-245, Tyr-275–Cys-295, Thr-316–Val-336, Phe-340–Ile-360, Ser-384–Phe-404, Leu-410–Val-430, Leu-460–Gly-480, and Trp-482–Ala-502. The RING-type; atypical zinc finger occupies Cys-537 to His-575. A compositionally biased stretch (polar residues) spans Ser-589–Pro-604. Positions Ser-589 to Pro-608 are disordered.

It localises to the membrane. The protein is RING finger protein 145 (rnf145) of Xenopus laevis (African clawed frog).